A 318-amino-acid polypeptide reads, in one-letter code: NAD kinase (318 aa).

The active-site Proton acceptor is Asp84. Residues 84 to 85 (DG), Arg89, 159 to 160 (NE), Arg170, Asp189, and 200 to 205 (TAYAFS) each bind NAD(+).

The protein belongs to the NAD kinase family. A divalent metal cation serves as cofactor.

It is found in the cytoplasm. The enzyme catalyses NAD(+) + ATP = ADP + NADP(+) + H(+). In terms of biological role, involved in the regulation of the intracellular balance of NAD and NADP, and is a key enzyme in the biosynthesis of NADP. Catalyzes specifically the phosphorylation on 2'-hydroxyl of the adenosine moiety of NAD to yield NADP. This chain is NAD kinase, found in Cutibacterium acnes (strain DSM 16379 / KPA171202) (Propionibacterium acnes).